A 156-amino-acid chain; its full sequence is ATP synthase subunit b (156 aa).

Residues 12–32 (VAFLIFVLFCMKFIWPPVIAA) traverse the membrane as a helical segment.

This sequence belongs to the ATPase B chain family. F-type ATPases have 2 components, F(1) - the catalytic core - and F(0) - the membrane proton channel. F(1) has five subunits: alpha(3), beta(3), gamma(1), delta(1), epsilon(1). F(0) has three main subunits: a(1), b(2) and c(10-14). The alpha and beta chains form an alternating ring which encloses part of the gamma chain. F(1) is attached to F(0) by a central stalk formed by the gamma and epsilon chains, while a peripheral stalk is formed by the delta and b chains.

The protein resides in the cell inner membrane. In terms of biological role, f(1)F(0) ATP synthase produces ATP from ADP in the presence of a proton or sodium gradient. F-type ATPases consist of two structural domains, F(1) containing the extramembraneous catalytic core and F(0) containing the membrane proton channel, linked together by a central stalk and a peripheral stalk. During catalysis, ATP synthesis in the catalytic domain of F(1) is coupled via a rotary mechanism of the central stalk subunits to proton translocation. Component of the F(0) channel, it forms part of the peripheral stalk, linking F(1) to F(0). The polypeptide is ATP synthase subunit b (Pseudomonas fluorescens (strain ATCC BAA-477 / NRRL B-23932 / Pf-5)).